A 203-amino-acid polypeptide reads, in one-letter code: DNA-directed RNA polymerase subunit gamma (203 aa).

Residues C34, C36, C49, and C52 each coordinate Zn(2+).

The protein belongs to the RNA polymerase beta' chain family. RpoC1 subfamily. As to quaternary structure, in cyanobacteria the RNAP catalytic core is composed of 2 alpha, 1 beta, 1 beta', 1 gamma and 1 omega subunit. When a sigma factor is associated with the core the holoenzyme is formed, which can initiate transcription. Zn(2+) serves as cofactor.

It catalyses the reaction RNA(n) + a ribonucleoside 5'-triphosphate = RNA(n+1) + diphosphate. In terms of biological role, DNA-dependent RNA polymerase catalyzes the transcription of DNA into RNA using the four ribonucleoside triphosphates as substrates. The protein is DNA-directed RNA polymerase subunit gamma (rpoC1) of Prochloron sp.